Here is a 115-residue protein sequence, read N- to C-terminus: Cholecystokinin (115 aa).

A signal peptide spans 1–20 (MNSGVCLCVLMAVLAAGALT). Positions 21–44 (QPVPPADPAGSGLQRAEEAPRRQL) are excised as a propeptide. Residues 23-52 (VPPADPAGSGLQRAEEAPRRQLRVSQRTDG) form a disordered region. Residue S31 is glycosylated (O-linked (Xyl...) (chondroitin sulfate) serine). Y97 carries the sulfotyrosine modification. F103 bears the Phenylalanine amide mark. A propeptide spanning residues 107–115 (SAEEYEYPS) is cleaved from the precursor. 2 positions are modified to sulfotyrosine: Y111 and Y113.

Belongs to the gastrin/cholecystokinin family. Binds to CCK-A receptors in the pancreas and CCK-B receptors in the brain. Post-translationally, the precursor is cleaved by proteases to produce a number of active cholecystokinins. The precursor is cleaved by ACE, which removes the Gly-Arg-Arg peptide at the C-terminus, leading to mature hormone. Detected in cerebrospinal fluid and urine (at protein level).

It localises to the secreted. Its function is as follows. This peptide hormone induces gall bladder contraction and the release of pancreatic enzymes in the gut. Its function in the brain is not clear. Binding to CCK-A receptors stimulates amylase release from the pancreas, binding to CCK-B receptors stimulates gastric acid secretion. This is Cholecystokinin (CCK) from Homo sapiens (Human).